Consider the following 297-residue polypeptide: UDP-N-acetylenolpyruvoylglucosamine reductase (297 aa).

An FAD-binding PCMH-type domain is found at 24 to 189 (KVGGNAEIFF…LKAIFKVNKG (166 aa)). Arg-169 is a catalytic residue. Residue Ser-218 is the Proton donor of the active site. The active site involves Glu-289.

It belongs to the MurB family. It depends on FAD as a cofactor.

Its subcellular location is the cytoplasm. The enzyme catalyses UDP-N-acetyl-alpha-D-muramate + NADP(+) = UDP-N-acetyl-3-O-(1-carboxyvinyl)-alpha-D-glucosamine + NADPH + H(+). It participates in cell wall biogenesis; peptidoglycan biosynthesis. In terms of biological role, cell wall formation. In Rickettsia canadensis (strain McKiel), this protein is UDP-N-acetylenolpyruvoylglucosamine reductase.